Reading from the N-terminus, the 221-residue chain is Putative 3-methyladenine DNA glycosylase (221 aa).

It belongs to the DNA glycosylase MPG family.

The chain is Putative 3-methyladenine DNA glycosylase from Herpetosiphon aurantiacus (strain ATCC 23779 / DSM 785 / 114-95).